The following is a 65-amino-acid chain: Large ribosomal subunit protein bL35 (65 aa).

The segment covering 1–45 has biased composition (basic residues); the sequence is MPKMKSHSGAKKRFKKTGNGKIKRKKANKGHLLTKKNAKRKRQLR. The segment at 1–65 is disordered; sequence MPKMKSHSGA…RDRIKRMLST (65 aa). Basic and acidic residues predominate over residues 48-57; that stretch reads VVVDDKANRD.

Belongs to the bacterial ribosomal protein bL35 family.

The polypeptide is Large ribosomal subunit protein bL35 (Salinibacter ruber (strain DSM 13855 / M31)).